The chain runs to 449 residues: tRNA-2-methylthio-N(6)-dimethylallyladenosine synthase (449 aa).

The MTTase N-terminal domain occupies Arg4–Glu119. Residues Cys13, Cys48, Cys82, Cys158, Cys162, and Cys165 each contribute to the [4Fe-4S] cluster site. The region spanning Gly144–Arg375 is the Radical SAM core domain. Positions Gln378–Gly446 constitute a TRAM domain.

Belongs to the methylthiotransferase family. MiaB subfamily. As to quaternary structure, monomer. The cofactor is [4Fe-4S] cluster.

Its subcellular location is the cytoplasm. It carries out the reaction N(6)-dimethylallyladenosine(37) in tRNA + (sulfur carrier)-SH + AH2 + 2 S-adenosyl-L-methionine = 2-methylsulfanyl-N(6)-dimethylallyladenosine(37) in tRNA + (sulfur carrier)-H + 5'-deoxyadenosine + L-methionine + A + S-adenosyl-L-homocysteine + 2 H(+). In terms of biological role, catalyzes the methylthiolation of N6-(dimethylallyl)adenosine (i(6)A), leading to the formation of 2-methylthio-N6-(dimethylallyl)adenosine (ms(2)i(6)A) at position 37 in tRNAs that read codons beginning with uridine. In Nitratidesulfovibrio vulgaris (strain ATCC 29579 / DSM 644 / CCUG 34227 / NCIMB 8303 / VKM B-1760 / Hildenborough) (Desulfovibrio vulgaris), this protein is tRNA-2-methylthio-N(6)-dimethylallyladenosine synthase.